A 328-amino-acid chain; its full sequence is Alanine racemase (328 aa).

Lys33 serves as the catalytic Proton acceptor; specific for D-alanine. Position 33 is an N6-(pyridoxal phosphate)lysine (Lys33). Arg118 is a binding site for substrate. Catalysis depends on Tyr237, which acts as the Proton acceptor; specific for L-alanine. Position 283 (Met283) interacts with substrate.

Belongs to the alanine racemase family. Pyridoxal 5'-phosphate serves as cofactor.

It catalyses the reaction L-alanine = D-alanine. The protein operates within amino-acid biosynthesis; D-alanine biosynthesis; D-alanine from L-alanine: step 1/1. Catalyzes the interconversion of L-alanine and D-alanine. May also act on other amino acids. The polypeptide is Alanine racemase (alr) (Campylobacter jejuni (strain RM1221)).